The following is a 601-amino-acid chain: MTDRVLPEQIRNFGIIAHVDHGKSTLADRILQLTGAVSDRDMREQYLDRLYIERERGITIKSQAVTLQWDCDATQYVLNMVDTPGHVDFTYEVSRSLAACEAAVILVDATQGVEAQTLANLHLAIENNLLIIPVLSKVDLPSADVEGATLELSEVLECRVEDVMHVSGKTGYGVKELLDLIVRKAPPPKGDVTSAPRALIFDSIYDSYRGVVTYVKMCDGTIRVGDKIRMMSTGAEHTLLEVGVSNPEPQSRHSLSVGEVGYFITGVKDVRKSRVGDTITTDTHTATVPLPGYSNPKPMVFSGIYPLNGNEYSALREGLDRLKLSDASIVYTPETSAALGFGFRCGFLGLLHMEIVSERLNREFGLATISTAPSVAYEITPDGEKTLVVMNPSDFPSGKIKEIKEPTVKVSILSPKEYIGSIMELCQARRGVMQGIEYFGSVRAELIYVMPLAEIVFDFFDSLKSRTKGYASFDYNPEGSQPADLVKVDILLQGNKVDAFSAIVHSSKAYSYGSSISKRLSELIPRQQFEVPIQAAIGSRVVARETIRAVRKDVVAKCYGGDITRKRKLLERQKQGKARMKLIGRVEVPQEVFVATLSSYK.

Positions E8 to K189 constitute a tr-type G domain. D20–T25 contacts GTP.

This sequence belongs to the TRAFAC class translation factor GTPase superfamily. Classic translation factor GTPase family. LepA subfamily.

It is found in the cell membrane. It carries out the reaction GTP + H2O = GDP + phosphate + H(+). Functionally, required for accurate and efficient protein synthesis under certain stress conditions. May act as a fidelity factor of the translation reaction, by catalyzing a one-codon backward translocation of tRNAs on improperly translocated ribosomes. Back-translocation proceeds from a post-translocation (POST) complex to a pre-translocation (PRE) complex, thus giving elongation factor G a second chance to translocate the tRNAs correctly. Binds to ribosomes in a GTP-dependent manner. The sequence is that of Elongation factor 4 from Tropheryma whipplei (strain TW08/27) (Whipple's bacillus).